We begin with the raw amino-acid sequence, 412 residues long: Multifunctional CCA protein (412 aa).

Residues Gly8 and Arg11 each contribute to the ATP site. CTP-binding residues include Gly8 and Arg11. 2 residues coordinate Mg(2+): Asp21 and Asp23. Positions 91, 138, and 141 each coordinate ATP. Residues Arg91, Arg138, and Arg141 each contribute to the CTP site. In terms of domain architecture, HD spans 229-334 (RGQHTLLALQ…LELFNQLDVW (106 aa)).

It belongs to the tRNA nucleotidyltransferase/poly(A) polymerase family. Bacterial CCA-adding enzyme type 1 subfamily. As to quaternary structure, monomer. Can also form homodimers and oligomers. Mg(2+) is required as a cofactor. Ni(2+) serves as cofactor.

It carries out the reaction a tRNA precursor + 2 CTP + ATP = a tRNA with a 3' CCA end + 3 diphosphate. The enzyme catalyses a tRNA with a 3' CCA end + 2 CTP + ATP = a tRNA with a 3' CCACCA end + 3 diphosphate. Catalyzes the addition and repair of the essential 3'-terminal CCA sequence in tRNAs without using a nucleic acid template. Adds these three nucleotides in the order of C, C, and A to the tRNA nucleotide-73, using CTP and ATP as substrates and producing inorganic pyrophosphate. tRNA 3'-terminal CCA addition is required both for tRNA processing and repair. Also involved in tRNA surveillance by mediating tandem CCA addition to generate a CCACCA at the 3' terminus of unstable tRNAs. While stable tRNAs receive only 3'-terminal CCA, unstable tRNAs are marked with CCACCA and rapidly degraded. In Haemophilus ducreyi (strain 35000HP / ATCC 700724), this protein is Multifunctional CCA protein.